A 159-amino-acid chain; its full sequence is Sulfur carrier protein DsrE2 (159 aa).

2 consecutive transmembrane segments (helical) span residues 21 to 43 (PFIL…TFYG) and 72 to 91 (WFPV…TAMM).

The protein resides in the cell membrane. The protein operates within energy metabolism; sulfur metabolism. Sulfur carrier protein probably involved in sulfur trafficking for oxidative dissimilatory sulfur metabolism. May be a component of a cytoplasmic sulfur relay system delivering sulfur to DsrC. Binds sulfur in the presence of sulfide in vitro. The protein is Sulfur carrier protein DsrE2 of Allochromatium vinosum (strain ATCC 17899 / DSM 180 / NBRC 103801 / NCIMB 10441 / D) (Chromatium vinosum).